The sequence spans 210 residues: MSNSYMPIDYVLNFSTFTLHAWNGLSLFLIISGTWFISGMCTKAKGDRLLLCWWALTGLIHIIQEGYFVFTPDLFKDKSPNFIAELWIEYNKGDSRYVSRHTSVLAIEGMAAVVMGPLSLLVVYAIVKAKSYSYILQFGVSIAQLYGACLYFLTAFLEGDNFASSPYYYYAYYVGQSSIWIIVPSLIAINFWRKMNGICQLHDKKKAKVC.

A run of 5 helical transmembrane segments spans residues 17–37 (FTLH…TWFI), 50–70 (LLCW…YFVF), 107–127 (IEGM…YAIV), 135–155 (ILQF…FLTA), and 172–192 (YYVG…INFW). The EXPERA domain occupies 46 to 188 (GDRLLLCWWA…IWIIVPSLIA (143 aa)).

The protein belongs to the EBP family.

Its subcellular location is the membrane. The catalysed reaction is 7,8-epoxymelianol = isomeliandiol. The protein operates within secondary metabolite biosynthesis; terpenoid biosynthesis. In terms of biological role, isomerase involved in the biosynthesis of limonoids and quassinoids triterpene natural products such as ailanthone, chaparrinone, glaucarubinone and amarolide, allelopathic degraded triterpene lactones inhibiting the growth of other plants, and possessing antimalarial, antifeedant, insecticidal, anti-inflammatory and anticancer activities. Catalyzes the conversion of 7,8-epoxymelianol to isomeliandiol via skeletal rearrangements. The sequence is that of Isomeliandiol synthase ISM1 from Ailanthus altissima (Tree-of-heaven).